A 359-amino-acid chain; its full sequence is 5-formaminoimidazole-4-carboxamide-1-(beta)-D-ribofuranosyl 5'-monophosphate synthetase (359 aa).

Residues His-28 and Ser-95 each contribute to the 5-amino-1-(5-phospho-beta-D-ribosyl)imidazole-4-carboxamide site. Residues 115-346 (ELMIWETDRD…MGRRIAREIK (232 aa)) enclose the ATP-grasp domain. ATP-binding positions include 144–206 (PEEI…ANIY) and Glu-228. A 5-amino-1-(5-phospho-beta-D-ribosyl)imidazole-4-carboxamide-binding site is contributed by Asn-256. Mg(2+) contacts are provided by Glu-295 and Glu-308.

Belongs to the phosphohexose mutase family. Mg(2+) is required as a cofactor. The cofactor is Mn(2+).

The catalysed reaction is 5-amino-1-(5-phospho-beta-D-ribosyl)imidazole-4-carboxamide + formate + ATP = 5-formamido-1-(5-phospho-D-ribosyl)imidazole-4-carboxamide + ADP + phosphate. Its pathway is purine metabolism; IMP biosynthesis via de novo pathway; 5-formamido-1-(5-phospho-D-ribosyl)imidazole-4-carboxamide from 5-amino-1-(5-phospho-D-ribosyl)imidazole-4-carboxamide (formate route): step 1/1. In terms of biological role, catalyzes the ATP- and formate-dependent formylation of 5-aminoimidazole-4-carboxamide-1-beta-d-ribofuranosyl 5'-monophosphate (AICAR) to 5-formaminoimidazole-4-carboxamide-1-beta-d-ribofuranosyl 5'-monophosphate (FAICAR) in the absence of folates. In Archaeoglobus fulgidus (strain ATCC 49558 / DSM 4304 / JCM 9628 / NBRC 100126 / VC-16), this protein is 5-formaminoimidazole-4-carboxamide-1-(beta)-D-ribofuranosyl 5'-monophosphate synthetase.